A 429-amino-acid polypeptide reads, in one-letter code: MKKQNNLRSLAAQAVEQVVEQGQSLSNVLPPLQQKVADKDKALLQELCFGVLRTLSQLEWLINKLMSRPMTGKQRTVHYLIMVGFYQLLYTRVPPHAALAETVEGAVSIKRPQLKGLINGVLRQFQRQQETLLNEFATSDARFLHPGWLVKRLQNAYPTQWQHIIEANNQRPPMWLRVNRTHHTRDGWLGLLEDAGMKGYPHPDYPDAVRLETPAPVHALPGFAEGWVTVQDASAQGCAVFLAPQNGEHILDLCAAPGGKTTHILEVAPEADVLAVDIDEQRLSRVYDNLKRLGMKATVKQGDGRYPAQWCGEQQFDRILLDAPCSATGVIRRHPDIKWLRRDRDIAELAQLQAEILDAVWPRLKPGGTLVYATCSVLPEENRDQIKTFLQRTPDAALSETGTPDQPGQQNLPGGEEGDGFFYAKLIKK.

Residues 254 to 260 (CAAPGGK), aspartate 277, aspartate 303, and aspartate 322 contribute to the S-adenosyl-L-methionine site. The active-site Nucleophile is cysteine 375. Positions 397 to 419 (ALSETGTPDQPGQQNLPGGEEGD) are disordered. Polar residues predominate over residues 400–412 (ETGTPDQPGQQNL).

The protein belongs to the class I-like SAM-binding methyltransferase superfamily. RsmB/NOP family.

The protein localises to the cytoplasm. It catalyses the reaction cytidine(967) in 16S rRNA + S-adenosyl-L-methionine = 5-methylcytidine(967) in 16S rRNA + S-adenosyl-L-homocysteine + H(+). Its function is as follows. Specifically methylates the cytosine at position 967 (m5C967) of 16S rRNA. This chain is Ribosomal RNA small subunit methyltransferase B, found in Salmonella heidelberg (strain SL476).